The chain runs to 339 residues: Phosphate acyltransferase (339 aa).

This sequence belongs to the PlsX family. As to quaternary structure, homodimer. Probably interacts with PlsY.

It is found in the cytoplasm. It carries out the reaction a fatty acyl-[ACP] + phosphate = an acyl phosphate + holo-[ACP]. It participates in lipid metabolism; phospholipid metabolism. Catalyzes the reversible formation of acyl-phosphate (acyl-PO(4)) from acyl-[acyl-carrier-protein] (acyl-ACP). This enzyme utilizes acyl-ACP as fatty acyl donor, but not acyl-CoA. In Dechloromonas aromatica (strain RCB), this protein is Phosphate acyltransferase.